Reading from the N-terminus, the 263-residue chain is 3-methyl-2-oxobutanoate hydroxymethyltransferase (263 aa).

Asp45 and Asp84 together coordinate Mg(2+). 3-methyl-2-oxobutanoate contacts are provided by residues 45 to 46 (DS), Asp84, and Lys112. Glu114 is a binding site for Mg(2+). Residue Glu180 is the Proton acceptor of the active site.

Belongs to the PanB family. As to quaternary structure, homodecamer; pentamer of dimers. Mg(2+) serves as cofactor.

The protein resides in the cytoplasm. The catalysed reaction is 3-methyl-2-oxobutanoate + (6R)-5,10-methylene-5,6,7,8-tetrahydrofolate + H2O = 2-dehydropantoate + (6S)-5,6,7,8-tetrahydrofolate. It participates in cofactor biosynthesis; (R)-pantothenate biosynthesis; (R)-pantoate from 3-methyl-2-oxobutanoate: step 1/2. In terms of biological role, catalyzes the reversible reaction in which hydroxymethyl group from 5,10-methylenetetrahydrofolate is transferred onto alpha-ketoisovalerate to form ketopantoate. The polypeptide is 3-methyl-2-oxobutanoate hydroxymethyltransferase (Salmonella paratyphi C (strain RKS4594)).